Reading from the N-terminus, the 512-residue chain is Krueppel-like factor 11 (512 aa).

The interval 109–128 (PQSPDLVEPSTRTPVSPQVT) is disordered. The span at 118–128 (STRTPVSPQVT) shows a compositional bias: polar residues. Serine 124 bears the Phosphoserine mark. 3 consecutive C2H2-type zinc fingers follow at residues 394 to 418 (YVCS…LRTH), 424 to 448 (FNCS…RRTH), and 454 to 476 (FVCP…ARRH).

It belongs to the Sp1 C2H2-type zinc-finger protein family. Interacts with SIN3A. In terms of tissue distribution, ubiquitous. Higher expression in erythroid cells.

It is found in the nucleus. Functionally, transcription factor. Activates the epsilon- and gamma-globin gene promoters and, to a much lower degree, the beta-globin gene and represses promoters containing SP1-like binding inhibiting cell growth. Represses transcription of SMAD7 which enhances TGF-beta signaling. Induces apoptosis. This is Krueppel-like factor 11 (KLF11) from Homo sapiens (Human).